Here is a 363-residue protein sequence, read N- to C-terminus: Phosphoserine aminotransferase (363 aa).

Arg-42 contacts L-glutamate. Residues Gly-76–Arg-77, Trp-102, Thr-156, Asp-175, and Gln-198 contribute to the pyridoxal 5'-phosphate site. The residue at position 199 (Lys-199) is an N6-(pyridoxal phosphate)lysine. Residue Asn-240–Thr-241 coordinates pyridoxal 5'-phosphate.

It belongs to the class-V pyridoxal-phosphate-dependent aminotransferase family. SerC subfamily. As to quaternary structure, homodimer. Pyridoxal 5'-phosphate is required as a cofactor.

It is found in the cytoplasm. It catalyses the reaction O-phospho-L-serine + 2-oxoglutarate = 3-phosphooxypyruvate + L-glutamate. The enzyme catalyses 4-(phosphooxy)-L-threonine + 2-oxoglutarate = (R)-3-hydroxy-2-oxo-4-phosphooxybutanoate + L-glutamate. Its pathway is amino-acid biosynthesis; L-serine biosynthesis; L-serine from 3-phospho-D-glycerate: step 2/3. It functions in the pathway cofactor biosynthesis; pyridoxine 5'-phosphate biosynthesis; pyridoxine 5'-phosphate from D-erythrose 4-phosphate: step 3/5. Catalyzes the reversible conversion of 3-phosphohydroxypyruvate to phosphoserine and of 3-hydroxy-2-oxo-4-phosphonooxybutanoate to phosphohydroxythreonine. In Shewanella baltica (strain OS195), this protein is Phosphoserine aminotransferase.